The following is a 256-amino-acid chain: Ribosomal RNA small subunit methyltransferase A (256 aa).

Positions 12, 14, 39, 60, 85, and 103 each coordinate S-adenosyl-L-methionine.

This sequence belongs to the class I-like SAM-binding methyltransferase superfamily. rRNA adenine N(6)-methyltransferase family. RsmA subfamily.

Its subcellular location is the cytoplasm. It carries out the reaction adenosine(1518)/adenosine(1519) in 16S rRNA + 4 S-adenosyl-L-methionine = N(6)-dimethyladenosine(1518)/N(6)-dimethyladenosine(1519) in 16S rRNA + 4 S-adenosyl-L-homocysteine + 4 H(+). In terms of biological role, specifically dimethylates two adjacent adenosines (A1518 and A1519) in the loop of a conserved hairpin near the 3'-end of 16S rRNA in the 30S particle. May play a critical role in biogenesis of 30S subunits. The polypeptide is Ribosomal RNA small subunit methyltransferase A (Legionella pneumophila subsp. pneumophila (strain Philadelphia 1 / ATCC 33152 / DSM 7513)).